Consider the following 178-residue polypeptide: Thymidine kinase (178 aa).

An ATP-binding site is contributed by 13–20 (GPMFAGKS). Glutamate 85 (proton acceptor) is an active-site residue. Phenylalanine 115 is a substrate binding site. Residues cysteine 140 and cysteine 143 each coordinate Zn(2+). 159 to 163 (IEIIG) serves as a coordination point for substrate. Zn(2+)-binding residues include cysteine 172 and cysteine 175.

Belongs to the thymidine kinase family.

The catalysed reaction is thymidine + ATP = dTMP + ADP + H(+). This Myxoma virus (strain Lausanne) (MYXV) protein is Thymidine kinase (TK).